The following is a 302-amino-acid chain: Heme A synthase (302 aa).

The Cytoplasmic segment spans residues Met-1–Lys-6. Residues Gly-7–Thr-27 form a helical membrane-spanning segment. Residues Lys-28–Arg-61 are Extracellular-facing. A disulfide bond links Cys-35 and Cys-42. Residue Glu-57 is part of the active site. A heme o-binding site is contributed by His-60. A helical transmembrane segment spans residues Phe-62–Ile-82. Residues Gly-83–Leu-91 are Cytoplasmic-facing. The chain crosses the membrane as a helical span at residues Ala-92–Phe-112. Over Gly-113 to Ala-120 the chain is Extracellular. A helical transmembrane segment spans residues Leu-121–Phe-141. A heme o-binding site is contributed by His-122. At Glu-142 to Met-158 the chain is on the cytoplasmic side. A helical membrane pass occupies residues Gln-159 to Val-179. Residues Arg-180–Trp-208 lie on the Extracellular side of the membrane. Cys-188 and Cys-194 form a disulfide bridge. Residues Val-209 to Val-229 form a helical membrane-spanning segment. Position 213 (His-213) interacts with heme b. Residues His-230–Tyr-242 are Cytoplasmic-facing. A helical membrane pass occupies residues Trp-243 to Val-263. The Extracellular portion of the chain corresponds to Tyr-264 to Ala-272. Residues Leu-273–Val-293 traverse the membrane as a helical segment. His-275 serves as a coordination point for heme b. Over Ala-294 to Lys-302 the chain is Cytoplasmic.

The protein belongs to the COX15/CtaA family. Type 1 subfamily. In terms of assembly, interacts with CtaB. It depends on heme b as a cofactor.

The protein resides in the cell membrane. It carries out the reaction Fe(II)-heme o + 2 A + H2O = Fe(II)-heme a + 2 AH2. It participates in porphyrin-containing compound metabolism; heme A biosynthesis; heme A from heme O: step 1/1. Functionally, catalyzes the conversion of heme O to heme A by two successive hydroxylations of the methyl group at C8. The first hydroxylation forms heme I, the second hydroxylation results in an unstable dihydroxymethyl group, which spontaneously dehydrates, resulting in the formyl group of heme A. This Bacillus licheniformis (strain ATCC 14580 / DSM 13 / JCM 2505 / CCUG 7422 / NBRC 12200 / NCIMB 9375 / NCTC 10341 / NRRL NRS-1264 / Gibson 46) protein is Heme A synthase.